Reading from the N-terminus, the 468-residue chain is Adenosylhomocysteinase (468 aa).

Substrate is bound by residues T57, D132, and E194. 195-197 (TTT) lines the NAD(+) pocket. Residues K224 and D228 each coordinate substrate. NAD(+) contacts are provided by residues N229, 258–263 (GFGDVG), E281, N316, 337–339 (IGH), and N382.

It belongs to the adenosylhomocysteinase family. Requires NAD(+) as cofactor.

The protein localises to the cytoplasm. The catalysed reaction is S-adenosyl-L-homocysteine + H2O = L-homocysteine + adenosine. The protein operates within amino-acid biosynthesis; L-homocysteine biosynthesis; L-homocysteine from S-adenosyl-L-homocysteine: step 1/1. May play a key role in the regulation of the intracellular concentration of adenosylhomocysteine. The polypeptide is Adenosylhomocysteinase (Methylorubrum populi (strain ATCC BAA-705 / NCIMB 13946 / BJ001) (Methylobacterium populi)).